The primary structure comprises 412 residues: MKYNIVFKFNVEGIVDKPDVIGAIFGQTENLFGDDFDLRELQDKGRLGRISVDLSTSKGRSEGTIIIPSNLDKVETALVAAMIENVDKVGPYNAEFKLIDIVDIREEKIKKIIGRAKEILGSWSREKTLDIREVINEITSSVKTGELTEYGPERLPAGPDVDKDPELIIVEGRADVINLLRYGYKNVIAVEGATGKIPQTLVDLTKQKKAVIAFLDGDHGGDLILKELLSSNIKLDYVARAPTGKEVEELTGKEIAKSLSNMVTIAQYIKKQQEAQQAIKQALATETTTTAVTTTSTQIQVEVKPEEKKEIQITVPAQIIEEIKKLPGTLEGILLDENWNIIEKIQVRDIVQKLENISADSIRYIVFDGVITQRLVDLASAKNIKMLIGARIGGINRRPKELELLSFNDIIS.

One can recognise a Toprim domain in the interval 165-243 (PELIIVEGRA…KLDYVARAPT (79 aa)). Glu-171, Asp-216, and Asp-218 together coordinate Mg(2+).

The protein belongs to the archaeal DnaG primase family. As to quaternary structure, forms a ternary complex with MCM helicase and DNA. Component of the archaeal exosome complex. It depends on Mg(2+) as a cofactor.

It catalyses the reaction ssDNA + n NTP = ssDNA/pppN(pN)n-1 hybrid + (n-1) diphosphate.. Functionally, RNA polymerase that catalyzes the synthesis of short RNA molecules used as primers for DNA polymerase during DNA replication. Also part of the exosome, which is a complex involved in RNA degradation. Acts as a poly(A)-binding protein that enhances the interaction between heteromeric, adenine-rich transcripts and the exosome. In Sulfolobus acidocaldarius (strain ATCC 33909 / DSM 639 / JCM 8929 / NBRC 15157 / NCIMB 11770), this protein is DNA primase DnaG.